The following is an 849-amino-acid chain: Putative respiratory burst oxidase homolog protein G (849 aa).

Residues 1 to 17 (MQRVSFEVKDTEAEKSS) are compositionally biased toward basic and acidic residues. The segment at 1–53 (MQRVSFEVKDTEAEKSSSEILSGSLPSTYRNPAMENVGNAVDDGSSVKNNPKL) is disordered. The Cytoplasmic segment spans residues 1 to 303 (MQRVSFEVKD…RFFVLDSWQR (303 aa)). The segment covering 18 to 27 (SEILSGSLPS) has biased composition (low complexity). 2 EF-hand-like regions span residues 118-128 (TANTDGLLLRS) and 153-164 (SHLKGDVITETE). 2 EF-hand domains span residues 176–211 (SFDS…SSSA) and 220–255 (KADE…AETK). Ca(2+) contacts are provided by Asp189, Asp191, Asp193, Arg195, and Glu200. Ser270 carries the phosphoserine modification. Residues 304–324 (VWVIALWLTIMAILFAYKYIQ) form a helical membrane-spanning segment. Residues 325–392 (YKNRAVYEVL…LNFHKVIAVG (68 aa)) lie on the Extracellular side of the membrane. In terms of domain architecture, Ferric oxidoreductase spans 342–502 (KGAAETLKLN…LFVIVYILLV (161 aa)). The helical transmembrane segment at 393–409 (IAIGVAIHSVSHLACDF) threads the bilayer. Residues 410 to 444 (PLLIAATPAEYMPLGKFFGEEQPKRYLHFVKSTEG) lie on the Cytoplasmic side of the membrane. The helical transmembrane segment at 445 to 465 (ITGLVMVFLMVIAFTLAMPWF) threads the bilayer. Topologically, residues 466–489 (RRGKLEKKLPGPLKKLASFNAFWY) are extracellular. The helical transmembrane segment at 490–510 (THHLFVIVYILLVLHGYYIYL) threads the bilayer. Residues 511-518 (NKEWYKKT) lie on the Cytoplasmic side of the membrane. The chain crosses the membrane as a helical span at residues 519 to 536 (TWMYLAVPVALYAYERLI). The Extracellular portion of the chain corresponds to 537-659 (RAFRSSIRTV…PYGAPAQDYK (123 aa)). In terms of domain architecture, FAD-binding FR-type spans 541–657 (SSIRTVKVLK…DGPYGAPAQD (117 aa)). The chain crosses the membrane as a helical span at residues 660 to 680 (KYEVVLLIGLGIGATPMISII). At 681–849 (KDIINNTETK…TRFSFHKENF (169 aa)) the chain is on the cytoplasmic side.

The protein belongs to the RBOH (TC 5.B.1.3) family. In terms of assembly, monomer and homodimer.

The protein resides in the membrane. In terms of biological role, calcium-dependent NADPH oxidase that generates superoxide. The sequence is that of Putative respiratory burst oxidase homolog protein G (RBOHG) from Arabidopsis thaliana (Mouse-ear cress).